The chain runs to 527 residues: Cytochrome P450 monooygenase 3 (527 aa).

A helical transmembrane segment spans residues 21-41; it reads IAVAFAALCGATGLLAFSWWI. Residue C473 participates in heme binding.

The protein belongs to the cytochrome P450 family. It depends on heme as a cofactor.

The protein resides in the membrane. Its pathway is plant hormone biosynthesis; gibberellin biosynthesis. Its function is as follows. Gibberellin 13-hydroxylase; part of the gene cluster that mediates the biosynthesis of gibberellins (GAs), diterpenoids that may provide a selective advantage during infection of the preferred host plant, rice. Gibberellins (GAs) are diterpenoids and are synthesized via the mevalonate pathway. Biosynthesis of the major metabolite GA3 (gibberellic acid) from geranylgeranyl diphosphate (GGPP) requires 13 steps. The GGPP produced by the geranylgeranyl diphosphate synthase GGS2 is converted to ent-kaurene via ent-copalyldiphosphate in a two-step cyclization reaction performed by the bifunctional ent-copalyl diphosphate synthase/ent-kaurene synthase enzyme (CPS/KS). Ent-Kaurene is metabolized to GAs by a series of oxidation reactions catalyzed by cytochrome P450 monooxygenases. Cytochrome P450 monooxygenase P450-4 is an ent-kaurene oxidase that catalyzes the three oxidation steps between ent-kaurene and ent-kaurenoic acid. The highly multifunctional cytochrome P450 monooxygenase P450-1 then catalyzes four steps involving oxidation at two carbon atoms, in the main pathway from ent-kaurenoic acid to GA14 via GA12-aldehyde as well as producing kaurenolides and fujenoic acids as by-products. The cytochrome P450 monooxygenase P450-2 then converts GA14 to GA4 by removal of C-20. GA4 is further converted to GA7 by the GA4 desaturase DES via 1,2-desaturation before cytochrome P450 monooxygenase P450-3, a 13-hydroxylase, hydroxylates GA7 to GA3, the final product of the GA-biosynthetic pathway. The sequence is that of Cytochrome P450 monooygenase 3 from Gibberella fujikuroi (strain CBS 195.34 / IMI 58289 / NRRL A-6831) (Bakanae and foot rot disease fungus).